We begin with the raw amino-acid sequence, 239 residues long: RNA-binding protein 38 (239 aa).

Positions 34–111 (TKIFVGGLPY…RKANVNLAYL (78 aa)) constitute an RRM domain.

Belongs to the RBM38 family.

It is found in the cytoplasm. The protein localises to the cytosol. The protein resides in the nucleus. Its function is as follows. RNA-binding protein that specifically bind the 3'-UTR of CDKN1A transcripts, leading to maintain the stability of CDKN1A transcripts, thereby acting as a mediator of the p53/TP53 family to regulate CDKN1A. CDKN1A is a cyclin-dependent kinase inhibitor transcriptionally regulated by the p53/TP53 family to induce cell cycle arrest. Isoform 1, but not isoform 2, has the ability to induce cell cycle arrest in G1 and maintain the stability of CDKN1A transcripts induced by p53/TP53. Also acts as a mRNA splicing factor. Specifically regulates the expression of FGFR2-IIIb, an epithelial cell-specific isoform of FGFR2. Plays a role in myogenic differentiation. Functionally, (Microbial infection) Essential factor for the splicing of the pre-mRNAs of human parvovirus B19 (B19V) and for the expression of B19V 11-kDa protein, which enhances viral replication. In Homo sapiens (Human), this protein is RNA-binding protein 38 (RBM38).